Here is a 389-residue protein sequence, read N- to C-terminus: Succinate--CoA ligase [ADP-forming] subunit beta (389 aa).

The region spanning K9–E244 is the ATP-grasp domain. ATP contacts are provided by residues K46, G53–G55, E99, C102, and E107. Mg(2+) contacts are provided by N199 and D213. Substrate-binding positions include N264 and G321 to V323.

The protein belongs to the succinate/malate CoA ligase beta subunit family. In terms of assembly, heterotetramer of two alpha and two beta subunits. Mg(2+) serves as cofactor.

It carries out the reaction succinate + ATP + CoA = succinyl-CoA + ADP + phosphate. The catalysed reaction is GTP + succinate + CoA = succinyl-CoA + GDP + phosphate. The protein operates within carbohydrate metabolism; tricarboxylic acid cycle; succinate from succinyl-CoA (ligase route): step 1/1. In terms of biological role, succinyl-CoA synthetase functions in the citric acid cycle (TCA), coupling the hydrolysis of succinyl-CoA to the synthesis of either ATP or GTP and thus represents the only step of substrate-level phosphorylation in the TCA. The beta subunit provides nucleotide specificity of the enzyme and binds the substrate succinate, while the binding sites for coenzyme A and phosphate are found in the alpha subunit. The chain is Succinate--CoA ligase [ADP-forming] subunit beta from Haemophilus influenzae (strain ATCC 51907 / DSM 11121 / KW20 / Rd).